Reading from the N-terminus, the 146-residue chain is Hemoglobin subunit beta-1/2 (146 aa).

The residue at position 1 (valine 1) is an N-acetylvaline. The region spanning 2–146 (HLTGEEKSGL…VANALAHKYH (145 aa)) is the Globin domain. The residue at position 12 (threonine 12) is a Phosphothreonine. Position 59 is an N6-acetyllysine (lysine 59). Histidine 63 is a binding site for heme b. Lysine 82 bears the N6-acetyllysine mark. Histidine 92 is a binding site for heme b. At cysteine 93 the chain carries S-nitrosocysteine. Lysine 144 carries the post-translational modification N6-acetyllysine.

The protein belongs to the globin family. Heterotetramer of two alpha chains and two beta chains. Red blood cells.

Functionally, involved in oxygen transport from the lung to the various peripheral tissues. This chain is Hemoglobin subunit beta-1/2 (HBB), found in Physeter macrocephalus (Sperm whale).